We begin with the raw amino-acid sequence, 230 residues long: Large ribosomal subunit protein uL1 (230 aa).

This sequence belongs to the universal ribosomal protein uL1 family. Part of the 50S ribosomal subunit.

Functionally, binds directly to 23S rRNA. The L1 stalk is quite mobile in the ribosome, and is involved in E site tRNA release. Its function is as follows. Protein L1 is also a translational repressor protein, it controls the translation of the L11 operon by binding to its mRNA. In Lactobacillus acidophilus (strain ATCC 700396 / NCK56 / N2 / NCFM), this protein is Large ribosomal subunit protein uL1.